Reading from the N-terminus, the 525-residue chain is Sucrose transport protein (525 aa).

Residues Met-1–Lys-37 lie on the Cytoplasmic side of the membrane. 12 helical membrane passes run Leu-38–Leu-58, Trp-72–Gly-92, Pro-107–Ala-127, Ala-145–Gly-165, Tyr-184–Gly-204, Ser-230–Val-250, Met-295–Phe-315, Gly-338–Leu-358, Leu-373–Lys-393, Leu-422–Leu-442, Gly-455–Thr-475, and Leu-488–Leu-508. At Leu-509–His-525 the chain is on the cytoplasmic side.

Belongs to the glycoside-pentoside-hexuronide (GPH) cation symporter transporter (TC 2.A.2.4) family.

It localises to the membrane. The protein operates within glycan biosynthesis; sucrose metabolism. In terms of biological role, responsible for the transport of sucrose into the cell, with the concomitant uptake of protons (symport system). Can also transport maltose at a lesser rate. This is Sucrose transport protein from Spinacia oleracea (Spinach).